The primary structure comprises 204 residues: Sperm acrosome developmental regulator (204 aa).

Serine 65 carries the post-translational modification Phosphoserine. The span at 172-184 (RRQERRRRHHLRA) shows a compositional bias: basic residues. The segment at 172 to 204 (RRQERRRRHHLRAHMGPQPDPAQGLKQDARSPL) is disordered.

The protein resides in the cytoplasmic vesicle. Its subcellular location is the secretory vesicle. It is found in the acrosome. Its function is as follows. May play an important role in acrosome formation and nucleus shaping during spermiogenesis. The chain is Sperm acrosome developmental regulator (SPACDR) from Bos taurus (Bovine).